The sequence spans 70 residues: Cold shock-like protein CspG (70 aa).

Residues 7-67 (GLVKWFNEEK…GQKGLQAANV (61 aa)) form the CSD domain.

It is found in the cytoplasm. The protein is Cold shock-like protein CspG (cspG) of Shewanella violacea (strain JCM 10179 / CIP 106290 / LMG 19151 / DSS12).